Consider the following 479-residue polypeptide: GTPase Der (479 aa).

2 consecutive EngA-type G domains span residues 3-166 (PVVA…AEEY) and 192-365 (LKLA…ASAT). Residues 9–16 (GRPNVGKS), 56–60 (DTGGI), 118–121 (NKID), 198–205 (GRPNVGKS), 245–249 (DTAGV), and 310–313 (NKWD) contribute to the GTP site. In terms of domain architecture, KH-like spans 366–450 (QRISTSKLTK…PIKVEFREPV (85 aa)).

It belongs to the TRAFAC class TrmE-Era-EngA-EngB-Septin-like GTPase superfamily. EngA (Der) GTPase family. In terms of assembly, associates with the 50S ribosomal subunit.

Its function is as follows. GTPase that plays an essential role in the late steps of ribosome biogenesis. The sequence is that of GTPase Der from Idiomarina loihiensis (strain ATCC BAA-735 / DSM 15497 / L2-TR).